The following is a 126-amino-acid chain: Histone H2B type 1-H (126 aa).

The span at 1 to 12 shows a compositional bias: low complexity; that stretch reads MPEPAKSAPAPK. Positions 1 to 36 are disordered; it reads MPEPAKSAPAPKKGSKKALTKAQKKDGKKRKRSRKE. N-acetylproline is present on proline 2. The residue at position 3 (glutamate 3) is an ADP-ribosyl glutamic acid. Lysine 6 bears the N6-(2-hydroxyisobutyryl)lysine; alternate mark. Position 6 is an N6-(beta-hydroxybutyryl)lysine; alternate (lysine 6). At lysine 6 the chain carries N6-acetyllysine; alternate. Lysine 6 bears the N6-butyryllysine; alternate mark. Residue lysine 6 is modified to N6-crotonyllysine; alternate. Residue lysine 6 is modified to N6-lactoyllysine; alternate. A Glycyl lysine isopeptide (Lys-Gly) (interchain with G-Cter in SUMO2); alternate cross-link involves residue lysine 6. Position 7 is an ADP-ribosylserine (serine 7). Position 12 is an N6-(beta-hydroxybutyryl)lysine; alternate (lysine 12). N6-acetyllysine; alternate occurs at positions 12 and 13. Residues lysine 12 and lysine 13 each carry the N6-crotonyllysine; alternate modification. N6-lactoyllysine; alternate is present on lysine 12. An N6-(2-hydroxyisobutyryl)lysine; alternate modification is found at lysine 13. Serine 15 is subject to Phosphoserine; by STK4/MST1. N6-acetyllysine; alternate is present on residues lysine 16, lysine 17, lysine 21, and lysine 24. Lysine 16, lysine 17, lysine 21, and lysine 24 each carry N6-crotonyllysine; alternate. 4 positions are modified to N6-lactoyllysine; alternate: lysine 16, lysine 17, lysine 21, and lysine 24. At lysine 17 the chain carries N6-glutaryllysine; alternate. N6-(2-hydroxyisobutyryl)lysine; alternate occurs at positions 21 and 24. Residue lysine 21 is modified to N6-(beta-hydroxybutyryl)lysine; alternate. Lysine 21 is modified (N6-butyryllysine; alternate). Lysine 21 participates in a covalent cross-link: Glycyl lysine isopeptide (Lys-Gly) (interchain with G-Cter in SUMO2); alternate. The residue at position 25 (lysine 25) is an N6-(2-hydroxyisobutyryl)lysine. Lysine 35 is modified (N6-(2-hydroxyisobutyryl)lysine; alternate). Position 35 is an N6-(beta-hydroxybutyryl)lysine; alternate (lysine 35). An N6-crotonyllysine; alternate modification is found at lysine 35. Lysine 35 is modified (N6-glutaryllysine; alternate). Lysine 35 carries the post-translational modification N6-succinyllysine; alternate. A Glycyl lysine isopeptide (Lys-Gly) (interchain with G-Cter in ubiquitin); alternate cross-link involves residue lysine 35. The residue at position 36 (glutamate 36) is a PolyADP-ribosyl glutamic acid. Serine 37 is modified (phosphoserine; by AMPK). N6-(2-hydroxyisobutyryl)lysine; alternate occurs at positions 44, 47, and 58. Lysine 44 carries the N6-lactoyllysine; alternate modification. N6-glutaryllysine; alternate is present on residues lysine 44 and lysine 47. Position 47 is an N6-methyllysine; alternate (lysine 47). At lysine 58 the chain carries N6,N6-dimethyllysine; alternate. A Dimethylated arginine modification is found at arginine 80. Lysine 86 carries the N6-(2-hydroxyisobutyryl)lysine; alternate modification. Position 86 is an N6-acetyllysine; alternate (lysine 86). Lysine 86 is modified (N6-lactoyllysine; alternate). Lysine 86 carries the N6,N6,N6-trimethyllysine; alternate modification. 2 positions are modified to omega-N-methylarginine: arginine 87 and arginine 93. N6-(2-hydroxyisobutyryl)lysine; alternate is present on lysine 109. Residue lysine 109 is modified to N6-(beta-hydroxybutyryl)lysine; alternate. Lysine 109 is subject to N6-lactoyllysine; alternate. Lysine 109 is subject to N6-glutaryllysine; alternate. Lysine 109 is modified (N6-methyllysine; alternate). The O-linked (GlcNAc) serine glycan is linked to serine 113. At threonine 116 the chain carries Phosphothreonine. 2 positions are modified to N6-(2-hydroxyisobutyryl)lysine; alternate: lysine 117 and lysine 121. Lysine 117 carries the N6-(beta-hydroxybutyryl)lysine; alternate modification. N6-lactoyllysine; alternate occurs at positions 117 and 121. 2 positions are modified to N6-glutaryllysine; alternate: lysine 117 and lysine 121. Residues lysine 117 and lysine 121 each carry the N6-succinyllysine; alternate modification. Lysine 117 carries the post-translational modification N6-methylated lysine; alternate. A Glycyl lysine isopeptide (Lys-Gly) (interchain with G-Cter in ubiquitin); alternate cross-link involves residue lysine 121.

It belongs to the histone H2B family. The nucleosome is a histone octamer containing two molecules each of H2A, H2B, H3 and H4 assembled in one H3-H4 heterotetramer and two H2A-H2B heterodimers. The octamer wraps approximately 147 bp of DNA. Post-translationally, monoubiquitination at Lys-35 (H2BK34Ub) by the MSL1/MSL2 dimer is required for histone H3 'Lys-4' (H3K4me) and 'Lys-79' (H3K79me) methylation and transcription activation at specific gene loci, such as HOXA9 and MEIS1 loci. Similarly, monoubiquitination at Lys-121 (H2BK120Ub) by the RNF20/40 complex gives a specific tag for epigenetic transcriptional activation and is also prerequisite for histone H3 'Lys-4' and 'Lys-79' methylation. It also functions cooperatively with the FACT dimer to stimulate elongation by RNA polymerase II. H2BK120Ub also acts as a regulator of mRNA splicing: deubiquitination by USP49 is required for efficient cotranscriptional splicing of a large set of exons. Phosphorylated on Ser-15 (H2BS14ph) by STK4/MST1 during apoptosis; which facilitates apoptotic chromatin condensation. Also phosphorylated on Ser-15 in response to DNA double strand breaks (DSBs), and in correlation with somatic hypermutation and immunoglobulin class-switch recombination. Phosphorylation at Ser-37 (H2BS36ph) by AMPK in response to stress promotes transcription. In terms of processing, glcNAcylation at Ser-113 promotes monoubiquitination of Lys-121. It fluctuates in response to extracellular glucose, and associates with transcribed genes. Post-translationally, ADP-ribosylated by PARP1 or PARP2 on Ser-7 (H2BS6ADPr) in response to DNA damage. H2BS6ADPr promotes recruitment of CHD1L. Mono-ADP-ribosylated on Glu-3 (H2BE2ADPr) by PARP3 in response to single-strand breaks. Poly ADP-ribosylation on Glu-36 (H2BE35ADPr) by PARP1 regulates adipogenesis: it inhibits phosphorylation at Ser-37 (H2BS36ph), thereby blocking expression of pro-adipogenetic genes. Crotonylation (Kcr) is specifically present in male germ cells and marks testis-specific genes in post-meiotic cells, including X-linked genes that escape sex chromosome inactivation in haploid cells. Crotonylation marks active promoters and enhancers and confers resistance to transcriptional repressors. It is also associated with post-meiotically activated genes on autosomes. In terms of processing, hydroxybutyrylation of histones is induced by starvation. Post-translationally, lactylated in macrophages by EP300/P300 by using lactoyl-CoA directly derived from endogenous or exogenous lactate, leading to stimulates gene transcription.

Its subcellular location is the nucleus. It localises to the chromosome. In terms of biological role, core component of nucleosome. Nucleosomes wrap and compact DNA into chromatin, limiting DNA accessibility to the cellular machineries which require DNA as a template. Histones thereby play a central role in transcription regulation, DNA repair, DNA replication and chromosomal stability. DNA accessibility is regulated via a complex set of post-translational modifications of histones, also called histone code, and nucleosome remodeling. The chain is Histone H2B type 1-H from Mus musculus (Mouse).